A 429-amino-acid polypeptide reads, in one-letter code: 3-phosphoshikimate 1-carboxyvinyltransferase (429 aa).

3-phosphoshikimate contacts are provided by K22, S23, and R27. A phosphoenolpyruvate-binding site is contributed by K22. The phosphoenolpyruvate site is built by G94 and R122. Residues S167, Q169, D315, and K342 each coordinate 3-phosphoshikimate. Q169 provides a ligand contact to phosphoenolpyruvate. D315 serves as the catalytic Proton acceptor. Residues R346 and R388 each coordinate phosphoenolpyruvate.

Belongs to the EPSP synthase family. Monomer.

The protein resides in the cytoplasm. The enzyme catalyses 3-phosphoshikimate + phosphoenolpyruvate = 5-O-(1-carboxyvinyl)-3-phosphoshikimate + phosphate. It functions in the pathway metabolic intermediate biosynthesis; chorismate biosynthesis; chorismate from D-erythrose 4-phosphate and phosphoenolpyruvate: step 6/7. In terms of biological role, catalyzes the transfer of the enolpyruvyl moiety of phosphoenolpyruvate (PEP) to the 5-hydroxyl of shikimate-3-phosphate (S3P) to produce enolpyruvyl shikimate-3-phosphate and inorganic phosphate. The chain is 3-phosphoshikimate 1-carboxyvinyltransferase from Citrifermentans bemidjiense (strain ATCC BAA-1014 / DSM 16622 / JCM 12645 / Bem) (Geobacter bemidjiensis).